The primary structure comprises 288 residues: ATP synthase gamma chain (288 aa).

The protein belongs to the ATPase gamma chain family. As to quaternary structure, F-type ATPases have 2 components, CF(1) - the catalytic core - and CF(0) - the membrane proton channel. CF(1) has five subunits: alpha(3), beta(3), gamma(1), delta(1), epsilon(1). CF(0) has three main subunits: a, b and c.

It localises to the cell inner membrane. Functionally, produces ATP from ADP in the presence of a proton gradient across the membrane. The gamma chain is believed to be important in regulating ATPase activity and the flow of protons through the CF(0) complex. The polypeptide is ATP synthase gamma chain (Trichlorobacter lovleyi (strain ATCC BAA-1151 / DSM 17278 / SZ) (Geobacter lovleyi)).